Consider the following 346-residue polypeptide: N-acetyl-gamma-glutamyl-phosphate reductase (346 aa).

The active site involves C150.

This sequence belongs to the NAGSA dehydrogenase family. Type 1 subfamily.

The protein resides in the cytoplasm. The enzyme catalyses N-acetyl-L-glutamate 5-semialdehyde + phosphate + NADP(+) = N-acetyl-L-glutamyl 5-phosphate + NADPH + H(+). The protein operates within amino-acid biosynthesis; L-arginine biosynthesis; N(2)-acetyl-L-ornithine from L-glutamate: step 3/4. In terms of biological role, catalyzes the NADPH-dependent reduction of N-acetyl-5-glutamyl phosphate to yield N-acetyl-L-glutamate 5-semialdehyde. The protein is N-acetyl-gamma-glutamyl-phosphate reductase of Desulforamulus reducens (strain ATCC BAA-1160 / DSM 100696 / MI-1) (Desulfotomaculum reducens).